A 181-amino-acid chain; its full sequence is Large ribosomal subunit protein uL10 (181 aa).

It belongs to the universal ribosomal protein uL10 family. As to quaternary structure, part of the ribosomal stalk of the 50S ribosomal subunit. The N-terminus interacts with L11 and the large rRNA to form the base of the stalk. The C-terminus forms an elongated spine to which L12 dimers bind in a sequential fashion forming a multimeric L10(L12)X complex.

In terms of biological role, forms part of the ribosomal stalk, playing a central role in the interaction of the ribosome with GTP-bound translation factors. The chain is Large ribosomal subunit protein uL10 from Trichormus variabilis (strain ATCC 29413 / PCC 7937) (Anabaena variabilis).